Consider the following 252-residue polypeptide: MALHFSAQQFEGRFQSKRLNNWEYPRFSPPRPRGLQKNAKVVAANNGHLLPEVIKEGNSFGQYRGTYELPRRITRAFCAHYDACLSGRYKFVDFPRDLCNCQRENRRALACDQRLTLGHKDDPYWMRERCQTKCEGLQKLRALSERSARCNRAKCDVVSEKTVKMTPKAIKTTGVATEKRRRKRTITAFSKGRTALHPNELTKPIPSSEKPAATVATPKDKPKDKPKDKEAGKKDKTKDKGKEKERKAAKGH.

Residues 177–252 form a disordered region; it reads TEKRRRKRTI…EKERKAAKGH (76 aa). A compositionally biased stretch (basic and acidic residues) spans 218 to 252; it reads PKDKPKDKPKDKEAGKKDKTKDKGKEKERKAAKGH.

This sequence belongs to the Flattop family.

This Drosophila melanogaster (Fruit fly) protein is Protein Flattop homolog.